The chain runs to 482 residues: Probable cytosol aminopeptidase (482 aa).

K251 and D256 together coordinate Mn(2+). The active site involves K263. Residues D274, D333, and E335 each coordinate Mn(2+). R337 is a catalytic residue.

This sequence belongs to the peptidase M17 family. The cofactor is Mn(2+).

The protein resides in the cytoplasm. It catalyses the reaction Release of an N-terminal amino acid, Xaa-|-Yaa-, in which Xaa is preferably Leu, but may be other amino acids including Pro although not Arg or Lys, and Yaa may be Pro. Amino acid amides and methyl esters are also readily hydrolyzed, but rates on arylamides are exceedingly low.. It carries out the reaction Release of an N-terminal amino acid, preferentially leucine, but not glutamic or aspartic acids.. In terms of biological role, presumably involved in the processing and regular turnover of intracellular proteins. Catalyzes the removal of unsubstituted N-terminal amino acids from various peptides. This Acinetobacter baylyi (strain ATCC 33305 / BD413 / ADP1) protein is Probable cytosol aminopeptidase.